Consider the following 52-residue polypeptide: UPF0181 protein VPA0916 (52 aa).

Belongs to the UPF0181 family.

This chain is UPF0181 protein VPA0916, found in Vibrio parahaemolyticus serotype O3:K6 (strain RIMD 2210633).